We begin with the raw amino-acid sequence, 337 residues long: MYKPQQQQQLFDLQDNNGAAFDNGGTDPSCWLSHENEISRTDSSLSSSNVDPLLFNDLVQIVPLVQSLIDRKEKSSFTRRGSMTYTKMPSRESLYKKTSEVKGRNAGQSTATKKHRDQNKNVSSSQDGYAENFSTPSSTSSLTEKDREELMTLREKVEDLQKKLLEKDELLKEAEILKNEITATNAELDEMKKDISEKDFLVKTTQVQLSDALVKLADKKAAVEKLEWEAMTSSKKVERLQEDLDLLQGEISSFIQFVHALTGNDSRDSAEECNVIPYPWDQNVEIDKLNERDLQKMEAAREAYIAAVAAAKENPDEASLSAASTARSYLQSLVLRT.

The interval Arg-80–Arg-147 is disordered. Residues Pro-89–Gly-103 are compositionally biased toward basic and acidic residues. Residues Lys-120–Leu-142 are compositionally biased toward polar residues. Coiled-coil stretches lie at residues Thr-143–Asp-194, Val-223–Glu-250, and Leu-294–Asn-314.

It belongs to the microtubule binding protein 2C family. Interacts with KN-1. Binds to tobacco mosaic virus movement protein (TMV-MP) at microtubules. In terms of tissue distribution, constitutively expressed in leaves.

It is found in the cytoplasm. Its subcellular location is the cytoskeleton. In terms of biological role, prevents homeodomain proteins (e.g. STM) association to plasmodesmata and, consequently, cell-to-cell transport. Binds to RNA. Alters KN1 RNA-binding capacity. Regulates cytoskeleton (e.g. actin) organization that determinates cell shape. Interferes with cell-to-cell transport of tobacco mosaic virus movement protein (TMV-MP) by mediating its accumulation at microtubules, thus interfering with cell-to-cell virus movement. The protein is Protein MICROTUBULE BINDING PROTEIN 2C of Nicotiana tabacum (Common tobacco).